We begin with the raw amino-acid sequence, 182 residues long: Protein canopy homolog 2 (182 aa).

A signal peptide spans 1–20 (MKGWGWLALLLGVLLGTAWA). In terms of domain architecture, Saposin B-type spans 24-175 (QDLHCGACRA…KRTDLCDHAL (152 aa)). 3 cysteine pairs are disulfide-bonded: Cys-28–Cys-171, Cys-31–Cys-164, and Cys-86–Cys-137. Ser-115 carries the post-translational modification Phosphoserine. The Prevents secretion from ER motif lies at 179 to 182 (HDEL).

It belongs to the canopy family. As to quaternary structure, interacts with MYLIP/MIR.

It localises to the endoplasmic reticulum. Positive regulator of neurite outgrowth by stabilizing myosin regulatory light chain (MRLC). It prevents MIR-mediated MRLC ubiquitination and its subsequent proteasomal degradation. In Mus musculus (Mouse), this protein is Protein canopy homolog 2 (Cnpy2).